The primary structure comprises 222 residues: UPF0173 metal-dependent hydrolase Nther_2337 (222 aa).

The protein belongs to the UPF0173 family.

This is UPF0173 metal-dependent hydrolase Nther_2337 from Natranaerobius thermophilus (strain ATCC BAA-1301 / DSM 18059 / JW/NM-WN-LF).